The following is a 304-amino-acid chain: Non-structural maintenance of chromosomes element 3 homolog (304 aa).

2 disordered regions span residues 1–82 (MLQK…PRSQ) and 285–304 (ALAD…APSS). Basic and acidic residues predominate over residues 32-43 (AGEDARVLRDGF). Phosphoserine is present on residues serine 57, serine 60, and serine 64. The span at 60–80 (SQGPSPQGARRAQAAPAVGPR) shows a compositional bias: low complexity. Positions 78–304 (GPRSQKQLEL…PQPSGPAPSS (227 aa)) are interaction with NSMCE1. The MAGE domain maps to 85–285 (LELKVSELVQ…KDWPAQYCEA (201 aa)).

Component of the SMC5-SMC6 complex which consists at least of SMC5, SMC6, NSMCE2, NSMCE1, NSMCE4A or EID3 and NSMCE3. NSMCE1, NSMCE4A or EID3 and NSMCE3 probably form a subcomplex that bridges the head domains of the SMC5:SMC6 heterodimer. Interacts with PJA1. Interacts with E2F1 (via C-terminus). Interacts with NGFR (via C-terminus). Interacts with NSMCE1. Interacts with NSMCE4. Interacts with SMC6. Interacts with EID3. As to expression, ubiquitous.

The protein resides in the cytoplasm. Its subcellular location is the nucleus. The protein localises to the chromosome. It localises to the telomere. Its function is as follows. Component of the SMC5-SMC6 complex, a complex involved in repair of DNA double-strand breaks by homologous recombination. The complex may promote sister chromatid homologous recombination by recruiting the SMC1-SMC3 cohesin complex to double-strand breaks. The complex is required for telomere maintenance via recombination in ALT (alternative lengthening of telomeres) cell lines and mediates sumoylation of shelterin complex (telosome) components which is proposed to lead to shelterin complex disassembly in ALT-associated PML bodies (APBs). In vitro enhances ubiquitin ligase activity of NSMCE1. Proposed to act through recruitment and/or stabilization of the Ubl-conjugating enzyme (E2) at the E3:substrate complex. May be a growth suppressor that facilitates the entry of the cell into cell cycle arrest. This Homo sapiens (Human) protein is Non-structural maintenance of chromosomes element 3 homolog.